Here is a 505-residue protein sequence, read N- to C-terminus: UDP-N-acetylmuramyl-tripeptide synthetase (505 aa).

Ser35 is a binding site for UDP-N-acetyl-alpha-D-muramoyl-L-alanyl-D-glutamate. Residue 118 to 124 (GTDGKSS) participates in ATP binding. UDP-N-acetyl-alpha-D-muramoyl-L-alanyl-D-glutamate contacts are provided by residues 163–164 (ST), Thr190, and Arg200. Lys232 carries the post-translational modification N6-carboxylysine.

Belongs to the MurCDEF family. MurE subfamily. In terms of processing, carboxylation is probably crucial for Mg(2+) binding and, consequently, for the gamma-phosphate positioning of ATP.

Its subcellular location is the cytoplasm. The protein operates within cell wall biogenesis; peptidoglycan biosynthesis. In terms of biological role, catalyzes the addition of an amino acid to the nucleotide precursor UDP-N-acetylmuramoyl-L-alanyl-D-glutamate (UMAG) in the biosynthesis of bacterial cell-wall peptidoglycan. The chain is UDP-N-acetylmuramyl-tripeptide synthetase from Borreliella afzelii (strain PKo) (Borrelia afzelii).